The primary structure comprises 202 residues: Small ribosomal subunit protein uS4 (202 aa).

An S4 RNA-binding domain is found at 94-157; it reads SRLDSLVYRA…LEIPLIKNTL (64 aa).

The protein belongs to the universal ribosomal protein uS4 family. As to quaternary structure, part of the 30S ribosomal subunit. Contacts protein S5. The interaction surface between S4 and S5 is involved in control of translational fidelity.

In terms of biological role, one of the primary rRNA binding proteins, it binds directly to 16S rRNA where it nucleates assembly of the body of the 30S subunit. With S5 and S12 plays an important role in translational accuracy. This Ureaplasma parvum serovar 3 (strain ATCC 27815 / 27 / NCTC 11736) protein is Small ribosomal subunit protein uS4.